The following is a 664-amino-acid chain: uncharacterized protein (664 aa).

This is an uncharacterized protein from Mycoplasma pneumoniae (strain ATCC 29342 / M129 / Subtype 1) (Mycoplasmoides pneumoniae).